We begin with the raw amino-acid sequence, 255 residues long: Zinc import ATP-binding protein ZnuC (255 aa).

The 216-residue stretch at 4-219 (VDVDGLSLRY…PEYRALFGTG (216 aa)) folds into the ABC transporter domain. 36–43 (GPNGSGKT) contributes to the ATP binding site. A disordered region spans residues 234–255 (EHDHHDGCAHGQATEDRTEAAE).

The protein belongs to the ABC transporter superfamily. Zinc importer (TC 3.A.1.15.5) family. The complex is composed of two ATP-binding proteins (ZnuC), two transmembrane proteins (ZnuB) and a solute-binding protein (ZnuA).

It is found in the cell inner membrane. The enzyme catalyses Zn(2+)(out) + ATP(in) + H2O(in) = Zn(2+)(in) + ADP(in) + phosphate(in) + H(+)(in). In terms of biological role, part of the ABC transporter complex ZnuABC involved in zinc import. Responsible for energy coupling to the transport system. This chain is Zinc import ATP-binding protein ZnuC, found in Roseobacter denitrificans (strain ATCC 33942 / OCh 114) (Erythrobacter sp. (strain OCh 114)).